The following is an 891-amino-acid chain: DNA mismatch repair protein MutS (891 aa).

Residue 646–653 (GPNMAGKS) participates in ATP binding.

It belongs to the DNA mismatch repair MutS family.

In terms of biological role, this protein is involved in the repair of mismatches in DNA. It is possible that it carries out the mismatch recognition step. This protein has a weak ATPase activity. The sequence is that of DNA mismatch repair protein MutS from Rickettsia massiliae (strain Mtu5).